Consider the following 296-residue polypeptide: 5'-3' exonuclease (296 aa).

The region spanning 175 to 262 (VMPKALIDIK…VPLACTLKDA (88 aa)) is the 5'-3' exonuclease domain.

5'-3' exonuclease acting preferentially on double-stranded DNA. This Bacillus subtilis (strain 168) protein is 5'-3' exonuclease (ypcP).